Here is a 446-residue protein sequence, read N- to C-terminus: Glutamine synthetase (446 aa).

The region spanning 14–107 (NNVKFLRFQF…IICDVYRKNG (94 aa)) is the GS beta-grasp domain. The region spanning 114-446 (PRGCLKRVLA…DWEFNKYVRI (333 aa)) is the GS catalytic domain. 2 residues coordinate Mg(2+): Glu138 and Glu140. Residue Glu187 coordinates ATP. The Mg(2+) site is built by Glu192 and Glu199. L-glutamate is bound by residues 243–244 (NG) and Gly244. Mg(2+) is bound at residue His248. Residue Ser252 coordinates ATP. Residues Arg301, Glu307, and Arg319 each contribute to the L-glutamate site. 3 residues coordinate ATP: Arg319, Arg324, and Lys331. A Mg(2+)-binding site is contributed by Glu336. Arg338 is a binding site for L-glutamate.

Belongs to the glutamine synthetase family. Oligomer of 12 subunits arranged in the form of two hexagons. Mg(2+) serves as cofactor.

Its subcellular location is the cytoplasm. The enzyme catalyses L-glutamate + NH4(+) + ATP = L-glutamine + ADP + phosphate + H(+). Its function is as follows. Probably involved in nitrogen metabolism via ammonium assimilation. Catalyzes the ATP-dependent biosynthesis of glutamine from glutamate and ammonia. In Methanococcus voltae, this protein is Glutamine synthetase.